Consider the following 1013-residue polypeptide: Chitin synthase A (1013 aa).

N-linked (GlcNAc...) asparagine glycosylation is present at Asn-10. Disordered regions lie at residues 26 to 83 (RYSY…AADW) and 95 to 218 (ERAD…RRGV). Over residues 64 to 81 (TASRPASPARPWSPTRAA) the composition is skewed to low complexity. Residues 154 to 173 (TISSRHGPQGSVQSFTSEST) are compositionally biased toward polar residues. Asn-194 and Asn-316 each carry an N-linked (GlcNAc...) asparagine glycan. The next 5 helical transmembrane spans lie at 646–666 (LLQL…FFFI), 686–706 (IFIV…IFSM), 721–741 (MIVY…LIVL), 759–779 (LFVN…FTSF), and 792–811 (AQYF…YAFC). Asn-837 carries N-linked (GlcNAc...) asparagine glycosylation. Transmembrane regions (helical) follow at residues 892 to 912 (VSVW…VYGV) and 919 to 939 (VYLA…AIGS). N-linked (GlcNAc...) asparagine glycans are attached at residues Asn-967, Asn-980, Asn-989, and Asn-995.

It belongs to the chitin synthase family. Class II subfamily. As to expression, mainly expressed in the metulae, phialides, and conidia.

Its subcellular location is the cell membrane. The protein localises to the cell septum. The enzyme catalyses [(1-&gt;4)-N-acetyl-beta-D-glucosaminyl](n) + UDP-N-acetyl-alpha-D-glucosamine = [(1-&gt;4)-N-acetyl-beta-D-glucosaminyl](n+1) + UDP + H(+). Its function is as follows. Polymerizes chitin, a structural polymer of the cell wall and septum, by transferring the sugar moiety of UDP-GlcNAc to the non-reducing end of the growing chitin polymer. Seems not to be involved in hyphal growth, but, with chsC, chsA shares critical functions in hyphal wall integrity and differentiation. ChsA and chsC share also overlapping roles in septum formation. Invoved in the production of the asexual spores (conidia) that are formed by differentiated aerial hyphae called conidiophores. This chain is Chitin synthase A, found in Emericella nidulans (strain FGSC A4 / ATCC 38163 / CBS 112.46 / NRRL 194 / M139) (Aspergillus nidulans).